A 564-amino-acid chain; its full sequence is Serine/threonine-protein kinase PknA (564 aa).

Residues 9–271 (YRVIKTLGSG…TAREMLEALQ (263 aa)) form the Protein kinase domain. Residues 15–23 (LGSGGFGET) and Lys40 each bind ATP. Asp139 acts as the Proton acceptor in catalysis. The segment covering 360 to 406 (QPVTQTTSLPSETTISNNDTPTVEPSPTDTPETPISQTVTQDPTPQA) has biased composition (polar residues). A disordered region spans residues 360–458 (QPVTQTTSLP…PVEATDRPSP (99 aa)). Residues 428–445 (TTEPTTSVPQPTTPSEPQ) show a composition bias toward low complexity.

It belongs to the protein kinase superfamily. Ser/Thr protein kinase family.

It catalyses the reaction L-seryl-[protein] + ATP = O-phospho-L-seryl-[protein] + ADP + H(+). The catalysed reaction is L-threonyl-[protein] + ATP = O-phospho-L-threonyl-[protein] + ADP + H(+). In terms of biological role, probably required for both normal cellular growth and differentiation. Inactivation of pknA leads to colonies that appear light green and rough in the absence of combined nitrogen. This is Serine/threonine-protein kinase PknA (pknA) from Nostoc sp. (strain PCC 7120 / SAG 25.82 / UTEX 2576).